The sequence spans 365 residues: S-adenosylmethionine:tRNA ribosyltransferase-isomerase (365 aa).

Belongs to the QueA family. In terms of assembly, monomer.

The protein resides in the cytoplasm. It catalyses the reaction 7-aminomethyl-7-carbaguanosine(34) in tRNA + S-adenosyl-L-methionine = epoxyqueuosine(34) in tRNA + adenine + L-methionine + 2 H(+). It functions in the pathway tRNA modification; tRNA-queuosine biosynthesis. Functionally, transfers and isomerizes the ribose moiety from AdoMet to the 7-aminomethyl group of 7-deazaguanine (preQ1-tRNA) to give epoxyqueuosine (oQ-tRNA). The chain is S-adenosylmethionine:tRNA ribosyltransferase-isomerase from Rickettsia africae (strain ESF-5).